Consider the following 78-residue polypeptide: MIKLVLLVAAIAIFGTGFITVIINQFTSAKNIIMDLYNSDTWLIWLFGRMAVLFSHPLMLTISSLYIVGFIVSKTLYS.

Residues 1 to 29 form the signal peptide; the sequence is MIKLVLLVAAIAIFGTGFITVIINQFTSA. Residues 52-72 traverse the membrane as a helical segment; it reads VLFSHPLMLTISSLYIVGFIV.

The protein belongs to the plectrovirus ORF9 family. Homomultimerizes.

It localises to the virion. Its subcellular location is the host membrane. May self assemble to form a helical capsid wrapping up the viral genomic DNA. The virion assembly and budding take place at the host inner membrane. In Spiroplasma virus SpV1-C74 (SpV1), this protein is Putative capsid protein ORF9.